The following is a 587-amino-acid chain: Tripartite motif-containing protein 29 (587 aa).

A disordered region spans residues 1–71 (MEGADACRSN…SGEGKSGLFS (71 aa)). Phosphoserine is present on residues serine 21, serine 28, serine 58, and serine 104. The residue at position 106 (tyrosine 106) is a Phosphotyrosine. The segment at 220 to 260 (FEARKCPLHGKTMELFCQTDQTCICYLCMFQEHKNHSTVTV) adopts a B box-type zinc-finger fold. Cysteine 225, histidine 228, cysteine 247, and histidine 252 together coordinate Zn(2+). Residues 259 to 348 (TVEEAKAEKE…AVDQVKVIVD (90 aa)) adopt a coiled-coil conformation. Threonine 476 is modified (phosphothreonine). Serine 489 bears the Phosphoserine mark.

In terms of assembly, interacts with VIM and HINT1. Interacts with IKBKG/NEMO. Interacts with STING1.

The protein localises to the cytoplasm. It is found in the lysosome. In terms of biological role, plays a crucial role in the regulation of macrophage activation in response to viral or bacterial infections within the respiratory tract. Mechanistically, TRIM29 interacts with IKBKG/NEMO in the lysosome where it induces its 'Lys-48' ubiquitination and subsequent degradation. In turn, the expression of type I interferons and the production of pro-inflammatory cytokines are inhibited. Additionally, induces the 'Lys-48' ubiquitination of STING1 in a similar way, leading to its degradation. In Mus musculus (Mouse), this protein is Tripartite motif-containing protein 29 (Trim29).